Consider the following 177-residue polypeptide: Flavodoxin (177 aa).

The Flavodoxin-like domain maps to 4 to 173; that stretch reads IGIFFGSDTG…RIDSWLEKLK (170 aa).

It belongs to the flavodoxin family. It depends on FMN as a cofactor.

In terms of biological role, low-potential electron donor to a number of redox enzymes. NifF is the electron donor to nitrogenase. This chain is Flavodoxin (nifF), found in Enterobacter agglomerans (Erwinia herbicola).